Reading from the N-terminus, the 412-residue chain is Hyaluronidase-3 (412 aa).

The signal sequence occupies residues Met1–Ala22. 5 disulfides stabilise this stretch: Cys42–Cys332, Cys206–Cys221, Cys357–Cys368, Cys362–Cys396, and Cys398–Cys407. An N-linked (GlcNAc...) asparagine glycan is attached at Asn69. Glu129 acts as the Proton donor in catalysis. Asn216 carries N-linked (GlcNAc...) asparagine glycosylation. Residues Ala353 to Leu408 form the EGF-like domain.

The protein belongs to the glycosyl hydrolase 56 family. N-glycosylated. In terms of tissue distribution, expressed in testis, epididymal tissue, epididymal luminal fluid (ELF), acrosome-intact (AI) sperm and caput (CAP), corpus (COR) and caudal (CAU) sperm. Higher expression in sperm than testis (at protein level). Liver, kidney, skin, brain, stomach and testis. Expressed mainly in granulosa cells of the ovaries. Expressed in small and large antral follicles. Not present in theca or stroma cells. Expressed in testis and liver. Expressed in testis and CAP, COR, and CAU epididymis tissue.

The protein resides in the secreted. It localises to the cell membrane. Its subcellular location is the cytoplasmic vesicle. The protein localises to the secretory vesicle. It is found in the acrosome. The protein resides in the endoplasmic reticulum. It localises to the early endosome. It catalyses the reaction Random hydrolysis of (1-&gt;4)-linkages between N-acetyl-beta-D-glucosamine and D-glucuronate residues in hyaluronate.. Its function is as follows. Facilitates sperm penetration into the layer of cumulus cells surrounding the egg by digesting hyaluronic acid. Involved in induction of the acrosome reaction in the sperm. Involved in follicular atresia, the breakdown of immature ovarian follicles that are not selected to ovulate. Induces ovarian granulosa cell apoptosis, possibly via apoptotic signaling pathway involving CASP8 and CASP3 activation, and poly(ADP-ribose) polymerase (PARP) cleavage. Has no hyaluronidase activity in embryonic fibroblasts in vitro. Has no hyaluronidase activity in granulosa cells in vitro. The chain is Hyaluronidase-3 (Hyal3) from Mus musculus (Mouse).